We begin with the raw amino-acid sequence, 155 residues long: Small ribosomal subunit protein uS9 (155 aa).

The protein belongs to the universal ribosomal protein uS9 family.

The sequence is that of Small ribosomal subunit protein uS9 from Rhizobium leguminosarum bv. trifolii (strain WSM2304).